A 405-amino-acid polypeptide reads, in one-letter code: Adenosylhomocysteinase (405 aa).

Aspartate 113 and glutamate 138 together coordinate substrate. Residue 139–141 (TTT) participates in NAD(+) binding. Residues lysine 168 and aspartate 172 each coordinate substrate. Residues asparagine 173, 202 to 207 (GYGWCG), glutamate 225, asparagine 260, 281 to 283 (AGH), and asparagine 327 contribute to the NAD(+) site.

The protein belongs to the adenosylhomocysteinase family. NAD(+) serves as cofactor.

It is found in the cytoplasm. The catalysed reaction is S-adenosyl-L-homocysteine + H2O = L-homocysteine + adenosine. Its pathway is amino-acid biosynthesis; L-homocysteine biosynthesis; L-homocysteine from S-adenosyl-L-homocysteine: step 1/1. Its function is as follows. May play a key role in the regulation of the intracellular concentration of adenosylhomocysteine. The protein is Adenosylhomocysteinase of Archaeoglobus fulgidus (strain ATCC 49558 / DSM 4304 / JCM 9628 / NBRC 100126 / VC-16).